A 426-amino-acid chain; its full sequence is Dihydroorotase (426 aa).

2 residues coordinate Zn(2+): His-58 and His-60. Substrate-binding positions include 60 to 62 (HLR) and Asn-92. Residues Asp-150, His-177, and His-230 each coordinate Zn(2+). Position 276 (Asn-276) interacts with substrate. A Zn(2+)-binding site is contributed by Asp-303. The active site involves Asp-303. Position 307 (His-307) interacts with substrate.

Belongs to the metallo-dependent hydrolases superfamily. DHOase family. Class I DHOase subfamily. It depends on Zn(2+) as a cofactor.

The catalysed reaction is (S)-dihydroorotate + H2O = N-carbamoyl-L-aspartate + H(+). It participates in pyrimidine metabolism; UMP biosynthesis via de novo pathway; (S)-dihydroorotate from bicarbonate: step 3/3. In terms of biological role, catalyzes the reversible cyclization of carbamoyl aspartate to dihydroorotate. This is Dihydroorotase from Acetivibrio thermocellus (strain ATCC 27405 / DSM 1237 / JCM 9322 / NBRC 103400 / NCIMB 10682 / NRRL B-4536 / VPI 7372) (Clostridium thermocellum).